Consider the following 146-residue polypeptide: Large ribosomal subunit protein uL15 (146 aa).

The segment at 1–56 is disordered; sequence MKLHELKAAEGANKASKRVGRGTGSGLGKTSGRGQNGQNSRSGGGVRPGFEGGQMP. 2 stretches are compositionally biased toward gly residues: residues 21-35 and 42-52; these read RGTGSGLGKTSGRGQ and SGGGVRPGFEG.

It belongs to the universal ribosomal protein uL15 family. Part of the 50S ribosomal subunit.

Functionally, binds to the 23S rRNA. In Clostridium botulinum (strain ATCC 19397 / Type A), this protein is Large ribosomal subunit protein uL15.